Reading from the N-terminus, the 258-residue chain is Glucanase inhibitor protein 3 (258 aa).

An N-terminal signal peptide occupies residues 1-19 (MKIISAVAASSIALGAVSA). Positions 29 to 256 (VLGGAVVPSG…ALEWINSITK (228 aa)) constitute a Peptidase S1 domain. A disulfide bond links C56 and C72. Residues N90, N105, and N110 are each glycosylated (N-linked (GlcNAc...) asparagine). Cystine bridges form between C180–C192 and C202–C233.

It belongs to the peptidase S1 family. Forms an apoplastic complex with host endoglucanases in tomato leaves during P.infestans infection.

It is found in the secreted. Its function is as follows. Secreted effector that suppresses host plant glucan elicitor-mediated defense responses. Targets host endoglucanases and inhibits the endoglucanase-mediated release of elicitor-active glucan oligosaccharides from P.infestans cell walls. This Phytophthora infestans (Potato late blight agent) protein is Glucanase inhibitor protein 3.